A 558-amino-acid chain; its full sequence is Polypeptide N-acetylgalactosaminyltransferase 16 (558 aa).

The Cytoplasmic segment spans residues M1 to A6. A helical; Signal-anchor for type II membrane protein membrane pass occupies residues N7–Q26. Residues D27–T558 lie on the Lumenal side of the membrane. Positions S34–R46 are enriched in low complexity. Positions S34–D53 are disordered. 5 disulfide bridges follow: C113/C340, C331/C409, C441/C460, C486/C506, and C530/C543. A catalytic subdomain A region spans residues L122–R227. Substrate is bound by residues D163 and R188. D211 is a binding site for Mn(2+). Residue S212 participates in substrate binding. H213 provides a ligand contact to Mn(2+). A catalytic subdomain B region spans residues P286–R348. Substrate is bound at residue W317. Residue H345 participates in Mn(2+) binding. Substrate-binding residues include R348, H351, and Y353. Positions K428–L555 constitute a Ricin B-type lectin domain.

It belongs to the glycosyltransferase 2 family. GalNAc-T subfamily. The cofactor is Mn(2+). In the CNS, it is predominantly expressed in several distinct hypothalamic, thalamic and amygdaloid nuclei. The most abundant level of expression is in the paraventricular, ventromedial and arcuate nuclei of the hypothalamus, the anterodorsal and parafascicular nuclei of the thalamus and the central, basomedial and medial nuclei of the amygdala. Also expressed in cerebral cortex, lateral septum, habenula and hippocampus.

The protein resides in the golgi apparatus membrane. It carries out the reaction L-seryl-[protein] + UDP-N-acetyl-alpha-D-galactosamine = a 3-O-[N-acetyl-alpha-D-galactosaminyl]-L-seryl-[protein] + UDP + H(+). The catalysed reaction is L-threonyl-[protein] + UDP-N-acetyl-alpha-D-galactosamine = a 3-O-[N-acetyl-alpha-D-galactosaminyl]-L-threonyl-[protein] + UDP + H(+). It functions in the pathway protein modification; protein glycosylation. Functionally, catalyzes the initial reaction in O-linked oligosaccharide biosynthesis, the transfer of an N-acetyl-D-galactosamine residue to a serine or threonine residue on the protein receptor. The chain is Polypeptide N-acetylgalactosaminyltransferase 16 (Galnt16) from Mus musculus (Mouse).